The chain runs to 430 residues: Tol-Pal system protein TolB (430 aa).

A signal peptide spans 1–21 (MKQAFRVALGFFLLWASVLHA).

Belongs to the TolB family. As to quaternary structure, the Tol-Pal system is composed of five core proteins: the inner membrane proteins TolA, TolQ and TolR, the periplasmic protein TolB and the outer membrane protein Pal. They form a network linking the inner and outer membranes and the peptidoglycan layer.

The protein resides in the periplasm. Its function is as follows. Part of the Tol-Pal system, which plays a role in outer membrane invagination during cell division and is important for maintaining outer membrane integrity. TolB occupies a key intermediary position in the Tol-Pal system because it communicates directly with both membrane-embedded components, Pal in the outer membrane and TolA in the inner membrane. The sequence is that of Tol-Pal system protein TolB from Sodalis glossinidius (strain morsitans).